The sequence spans 143 residues: Large ribosomal subunit protein uL13 (143 aa).

This sequence belongs to the universal ribosomal protein uL13 family. Part of the 50S ribosomal subunit.

Its function is as follows. This protein is one of the early assembly proteins of the 50S ribosomal subunit, although it is not seen to bind rRNA by itself. It is important during the early stages of 50S assembly. The polypeptide is Large ribosomal subunit protein uL13 (Variovorax paradoxus (strain S110)).